Here is a 276-residue protein sequence, read N- to C-terminus: NADPH-dependent 7-cyano-7-deazaguanine reductase (276 aa).

83–85 (IES) contributes to the substrate binding site. An NADPH-binding site is contributed by 85–86 (SK). Catalysis depends on cysteine 184, which acts as the Thioimide intermediate. The Proton donor role is filled by aspartate 191. Substrate is bound at residue 223–224 (HE). NADPH is bound at residue 252 to 253 (RG).

The protein belongs to the GTP cyclohydrolase I family. QueF type 2 subfamily. Homodimer.

The protein resides in the cytoplasm. The catalysed reaction is 7-aminomethyl-7-carbaguanine + 2 NADP(+) = 7-cyano-7-deazaguanine + 2 NADPH + 3 H(+). It functions in the pathway tRNA modification; tRNA-queuosine biosynthesis. Its function is as follows. Catalyzes the NADPH-dependent reduction of 7-cyano-7-deazaguanine (preQ0) to 7-aminomethyl-7-deazaguanine (preQ1). The chain is NADPH-dependent 7-cyano-7-deazaguanine reductase from Pseudomonas paraeruginosa (strain DSM 24068 / PA7) (Pseudomonas aeruginosa (strain PA7)).